The following is a 39-amino-acid chain: Natriuretic peptide TcNPa (39 aa).

Positions 1–8 are excised as a propeptide; it reads SGSETAKI. Cysteine 12 and cysteine 28 are joined by a disulfide. Threonine 35 carries an O-linked (GalNAc...) threonine glycan.

The protein belongs to the natriuretic peptide family. In terms of processing, O-linked glycans consist of galactosyl-beta(1-3)-N-acetylgalactosamine (Gal-GalNAc). Post-translationally, the synthetic non-glycosylated form shows higher potency on natriuretic receptors (EC(50)=672.90 nM) and NPR2 (EC(50)=261.0 nM). In terms of tissue distribution, expressed by the venom gland.

The protein localises to the secreted. In terms of biological role, snake venom natriuretic peptide that targets both NPR1 (EC(50)=1080.0 nM) and NPR2 (EC(50)=328.60 nM). Exhibits hypotensive and vasodepressor activities. The polypeptide is Natriuretic peptide TcNPa (Tropidechis carinatus (Australian rough-scaled snake)).